We begin with the raw amino-acid sequence, 281 residues long: Nucleoid occlusion protein (281 aa).

Residues 1 to 24 form a disordered region; that stretch reads MKHPFSRLFSFGEKEQEEMEEKQE. Residues 145-164 constitute a DNA-binding region (H-T-H motif); that stretch reads EALAQRLGKGQSTIANKLRL.

The protein belongs to the ParB family.

The protein localises to the cytoplasm. The protein resides in the nucleoid. Functionally, effects nucleoid occlusion by binding relatively nonspecifically to DNA and preventing the assembly of the division machinery in the vicinity of the nucleoid, especially under conditions that disturb the cell cycle. It helps to coordinate cell division and chromosome segregation by preventing the formation of the Z ring through the nucleoid, which would cause chromosome breakage. The polypeptide is Nucleoid occlusion protein (Geobacillus kaustophilus (strain HTA426)).